The primary structure comprises 249 residues: Triosephosphate isomerase (249 aa).

Asparagine 9–lysine 11 serves as a coordination point for substrate. Histidine 95 serves as the catalytic Electrophile. Glutamate 167 functions as the Proton acceptor in the catalytic mechanism. Substrate contacts are provided by residues glycine 173, serine 213, and glycine 234–glycine 235.

Belongs to the triosephosphate isomerase family. In terms of assembly, homodimer.

The protein localises to the cytoplasm. It catalyses the reaction D-glyceraldehyde 3-phosphate = dihydroxyacetone phosphate. Its pathway is carbohydrate biosynthesis; gluconeogenesis. The protein operates within carbohydrate degradation; glycolysis; D-glyceraldehyde 3-phosphate from glycerone phosphate: step 1/1. Functionally, involved in the gluconeogenesis. Catalyzes stereospecifically the conversion of dihydroxyacetone phosphate (DHAP) to D-glyceraldehyde-3-phosphate (G3P). In Solibacter usitatus (strain Ellin6076), this protein is Triosephosphate isomerase.